Consider the following 578-residue polypeptide: NADPH oxidase 4 (578 aa).

The Cytoplasmic portion of the chain corresponds to 1–16 (MAVSWRSWLANEGVKH). The helical transmembrane segment at 17-37 (LCLFIWLSMNVLLFWKTFLLY) threads the bilayer. At 38–62 (NQGPEYHYLHQMLGLGLCLSRASAS) the chain is on the extracellular side. Residues 58 to 303 (RASASVLNLN…YCAERLYRYI (246 aa)) enclose the Ferric oxidoreductase domain. The helical transmembrane segment at 63 to 83 (VLNLNCSLILLPMCRTLLAYL) threads the bilayer. At 84–103 (RGSQKVPSRRTRRLLDKSRT) the chain is on the cytoplasmic side. The helical transmembrane segment at 104 to 124 (FHITCGVTICIFSGVHVAAHL) threads the bilayer. At 125 to 154 (VNALNFSVNYSEDFVELNAARYRDEDPRKL) the chain is on the extracellular side. Asn-133 carries N-linked (GlcNAc...) asparagine glycosylation. A helical membrane pass occupies residues 155–175 (LFTTVPGLTGVCMVVVLFLMI). Topologically, residues 176-188 (TASTYAIRVSNYD) are cytoplasmic. A helical transmembrane segment spans residues 189-209 (IFWYTHNLFFVFYMLLTLHVS). At 210-424 (GGLLKYQTNL…SPFEESLNYE (215 aa)) the chain is on the extracellular side. An E-loop; essential for H2O2 generating catalytic activity region spans residues 218–273 (NLDTHPPGCISLNRTSSQNISLPEYFSEHFHEPFPEGFSKPEEFTQNTFVKICMEE). A glycan (N-linked (GlcNAc...) asparagine) is linked at Asn-230. The mediates interaction with TLR4 stretch occupies residues 248 to 575 (HEPFPEGFSK…YGTRFEYNKE (328 aa)). The 116-residue stretch at 304 to 419 (RSNKPVTIIS…DGPFGSPFEE (116 aa)) folds into the FAD-binding FR-type domain. Residues 425–445 (VSLCVAGGIGVTPFASILNTL) form a helical membrane-spanning segment. At 446–578 (LDDWKPYKLR…RFEYNKESFS (133 aa)) the chain is on the cytoplasmic side.

In terms of assembly, interacts with, relocalizes and stabilizes CYBA/p22phox. Interacts with TLR4. Interacts with protein disulfide isomerase. Interacts with PPP1R15A. Interacts with LRRC8A; this interaction prevents the ubiquitin-mediated degradation of LRRC8A. Heme serves as cofactor. In terms of processing, N-glycosylation is required for the function.

It is found in the cytoplasm. It localises to the endoplasmic reticulum membrane. The protein resides in the cell membrane. The protein localises to the cell junction. Its subcellular location is the focal adhesion. It is found in the nucleus. The enzyme catalyses NADPH + 2 O2 = 2 superoxide + NADP(+) + H(+). It catalyses the reaction NADPH + O2 + H(+) = H2O2 + NADP(+). With respect to regulation, activated by insulin. Inhibited by diphenylene iodonium. Inhibited by plumbagin. Activated by phorbol 12-myristate 13-acetate (PMA). Its function is as follows. NADPH oxidase that catalyzes predominantly the reduction of oxygen to H2O2. Can also catalyze to a smaller extent, the reduction of oxygen to superoxide. May function as an oxygen sensor regulating the KCNK3/TASK-1 potassium channel and HIF1A activity. May regulate insulin signaling cascade. May play a role in apoptosis, bone resorption and lipolysaccharide-mediated activation of NFKB. May produce superoxide in the nucleus and play a role in regulating gene expression upon cell stimulation. Promotes ferroptosis, reactive oxygen species production and reduced glutathione (GSH) levels by activating NLRP3 inflammasome activation and cytokine release. The protein is NADPH oxidase 4 (NOX4) of Pongo abelii (Sumatran orangutan).